Reading from the N-terminus, the 282-residue chain is Protein GAM-1 (282 aa).

Positions 251 to 260 match the BC-box-like motif; it reads SLQDWARLGV.

Interacts with host HDAC1. Interacts with host E1-activating enzyme (SAE1/UBA2 heterodimer). Interacts with host retinoblastoma protein. Seems to form a complex with host E4F1 and HDAC1. Seems to form complexes with either CUL2-elongin BC complex-RBX1 or CUL5-elongin BC complex-RBX1. Interacts with TCEB1/Elongin-C, CUL2 and CUL5 in vitro.

The protein localises to the host nucleus. In terms of biological role, early protein essential for viral replication. Strong and global transcriptional activator of both viral and cellular genes. Activates transcription by blocking host retinoblastoma protein (RB) and inhibiting the SUMO pathway. Inhibition of host RB leads to the activation of E2F1-dependent transcription and, in particular, of E2F1-regulated S-phase genes. Stimulation of progression from G1 to S phase allows the virus to efficiently use the cellular DNA replicating machinery to achieve viral genome replication. Blocks the SUMO pathway by targeting the E1 enzyme (SAE1/UBA2 heterodimer) to the ubiquitin-proteasome machinery. Mediates SAE1 degradation possibly through the formation of complexes with either CUL2-elongin BC complex-RBX1 or CUL5-elongin BC complex-RBX1. The degradation of UBA2 is probably a consequent effect of SAE1 disappearance. Inhibits HDAC1 sumoylation, thereby interfering with histone deacetylation mediated by HDAC1, leading to activation of transcription. Mediates induction of heat-shock response. Seems to have an antiapoptotic function. This is Protein GAM-1 from Galliformes (FAdV-1).